Here is a 452-residue protein sequence, read N- to C-terminus: Mitochondrial distribution and morphology protein 10 (452 aa).

The tract at residues 105-130 (PLAPESWDSDGPGHEGSDGQEDETTP) is disordered.

This sequence belongs to the MDM10 family. As to quaternary structure, component of the ER-mitochondria encounter structure (ERMES) or MDM complex, composed of MMM1, MDM10, MDM12 and MDM34. Associates with the mitochondrial outer membrane sorting assembly machinery SAM(core) complex.

It localises to the mitochondrion outer membrane. Component of the ERMES/MDM complex, which serves as a molecular tether to connect the endoplasmic reticulum and mitochondria. Components of this complex are involved in the control of mitochondrial shape and protein biogenesis and may function in phospholipid exchange. MDM10 is involved in the late assembly steps of the general translocase of the mitochondrial outer membrane (TOM complex). Functions in the TOM40-specific route of the assembly of outer membrane beta-barrel proteins, including the association of TOM40 with the receptor TOM22 and small TOM proteins. Can associate with the SAM(core) complex as well as the MDM12-MMM1 complex, both involved in late steps of the major beta-barrel assembly pathway, that is responsible for biogenesis of all outer membrane beta-barrel proteins. May act as a switch that shuttles between both complexes and channels precursor proteins into the TOM40-specific pathway. Plays a role in mitochondrial morphology and in the inheritance of mitochondria. The polypeptide is Mitochondrial distribution and morphology protein 10 (Uncinocarpus reesii (strain UAMH 1704)).